A 146-amino-acid chain; its full sequence is Large ribosomal subunit protein uL13 (146 aa).

The interval 126 to 146 is disordered; that stretch reads AGPKHPHAAQQPKVYEPRPRG.

It belongs to the universal ribosomal protein uL13 family. In terms of assembly, part of the 50S ribosomal subunit.

Functionally, this protein is one of the early assembly proteins of the 50S ribosomal subunit, although it is not seen to bind rRNA by itself. It is important during the early stages of 50S assembly. This is Large ribosomal subunit protein uL13 from Roseiflexus castenholzii (strain DSM 13941 / HLO8).